Here is a 280-residue protein sequence, read N- to C-terminus: Inhibitor of growth protein 2 (280 aa).

Positions 48–120 (VLRELDNKYQ…VENRARQMEL (73 aa)) form a coiled coil. A disordered region spans residues 122–204 (SQCFQDPAES…KQEREASPVE (83 aa)). Residues 130 to 140 (ESERASDKAKM) are compositionally biased toward basic and acidic residues. Over residues 181-193 (KKSKSAKKKKRSK) the composition is skewed to basic residues. A Glycyl lysine isopeptide (Lys-Gly) (interchain with G-Cter in SUMO1) cross-link involves residue Lys-195. The segment at 212-261 (PTYCLCNQVSYGEMIGCDNEQCPIEWFHFSCVSLTYKPKGKWYCPKCRGD) adopts a PHD-type zinc-finger fold. Zn(2+) contacts are provided by Cys-215, Cys-217, Cys-228, Cys-233, His-239, Cys-242, Cys-255, and Cys-258. The span at 258–274 (CRGDNEKTMDKSTEKTK) shows a compositional bias: basic and acidic residues. The interval 258-280 (CRGDNEKTMDKSTEKTKKDRRSR) is disordered. Positions 264-280 (KTMDKSTEKTKKDRRSR) are PBR.

Belongs to the ING family. Interacts with H3K4me3 and to a lesser extent with H3K4me2. Component of a mSin3A-like complex at least consisting of SIN3A, HDAC1, HDAC2, RBBP4/RbAp48, RBBP7/RbAp46, SAP30 and ING2. In terms of processing, sumoylation enhances its association with SIN3A and is required for binding to some target gene promoters, this is the case for TMEM71. In terms of tissue distribution, widely expressed. Higher expressed in colon-cancer tumor than in normal colon tissues.

It is found in the nucleus. Functionally, seems to be involved in p53/TP53 activation and p53/TP53-dependent apoptotic pathways, probably by enhancing acetylation of p53/TP53. Component of a mSin3A-like corepressor complex, which is probably involved in deacetylation of nucleosomal histones. ING2 activity seems to be modulated by binding to phosphoinositides (PtdInsPs). In Homo sapiens (Human), this protein is Inhibitor of growth protein 2 (ING2).